The following is a 543-amino-acid chain: Hydroxylamine reductase (543 aa).

4 residues coordinate [4Fe-4S] cluster: Cys3, Cys6, Cys15, and Cys21. Residues His239, Glu263, Cys307, Cys398, Cys426, Cys451, Glu486, and Lys488 each coordinate hybrid [4Fe-2O-2S] cluster. A Cysteine persulfide modification is found at Cys398.

The protein belongs to the HCP family. [4Fe-4S] cluster serves as cofactor. It depends on hybrid [4Fe-2O-2S] cluster as a cofactor.

It is found in the cytoplasm. The enzyme catalyses A + NH4(+) + H2O = hydroxylamine + AH2 + H(+). Catalyzes the reduction of hydroxylamine to form NH(3) and H(2)O. The polypeptide is Hydroxylamine reductase (Methanococcus vannielii (strain ATCC 35089 / DSM 1224 / JCM 13029 / OCM 148 / SB)).